The sequence spans 533 residues: Probable RNA-binding protein 46 (533 aa).

3 RRM domains span residues 61–139 (CEVF…VSLD), 141–223 (CRLF…WADP), and 236–308 (KVLY…LAKP). The tract at residues 338-362 (ESHSKSLGKPPTLPTRLNGQHSPSP) is disordered.

Interacts with YTHDC2, MEIOC, MOV10, CNOT6L, DDX4, UPF1 and PABPC1. In terms of tissue distribution, expressed in the testis and ovary (at protein level). Expressed in spermatogonia and spermatocytes in testis (at protein level).

The protein resides in the cytoplasm. In terms of biological role, essential for male and female fertility, playing a crucial role in regulating germ cell development by ensuring the proper progression of meiosis prophase I. Regulates mitotic-to-meiotic transition in spermatogenesis by forming a complex with MEIOC and YTHDC2 which recognizes and down-regulates mitotic transcripts for a successful meiotic entry. Required for normal synaptonemal complex formation during meiosis, binding meiotic cohesin subunit mRNAs containing GCCUAU/GUUCGA motifs in their 3'UTRs regions and positively regulating their translation. Required for spermatogonial differentiation in both developing and adult testis. The protein is Probable RNA-binding protein 46 of Mus musculus (Mouse).